A 263-amino-acid polypeptide reads, in one-letter code: Endonuclease 8 (263 aa).

Catalysis depends on proline 2, which acts as the Schiff-base intermediate with DNA. Glutamate 3 (proton donor) is an active-site residue. Catalysis depends on lysine 53, which acts as the Proton donor; for beta-elimination activity. 3 residues coordinate DNA: glutamine 70, arginine 125, and asparagine 169. Residues 229-263 (KVFHRDGESCERCGGIIERTMLSSRPFYWCPHCQR) form an FPG-type zinc finger. Catalysis depends on arginine 253, which acts as the Proton donor; for delta-elimination activity.

The protein belongs to the FPG family. The cofactor is Zn(2+).

The catalysed reaction is 2'-deoxyribonucleotide-(2'-deoxyribose 5'-phosphate)-2'-deoxyribonucleotide-DNA = a 3'-end 2'-deoxyribonucleotide-(2,3-dehydro-2,3-deoxyribose 5'-phosphate)-DNA + a 5'-end 5'-phospho-2'-deoxyribonucleoside-DNA + H(+). Involved in base excision repair of DNA damaged by oxidation or by mutagenic agents. Acts as a DNA glycosylase that recognizes and removes damaged bases. Has a preference for oxidized pyrimidines, such as thymine glycol, 5,6-dihydrouracil and 5,6-dihydrothymine. Has AP (apurinic/apyrimidinic) lyase activity and introduces nicks in the DNA strand. Cleaves the DNA backbone by beta-delta elimination to generate a single-strand break at the site of the removed base with both 3'- and 5'-phosphates. This is Endonuclease 8 from Pectobacterium carotovorum subsp. carotovorum (strain PC1).